Here is a 234-residue protein sequence, read N- to C-terminus: MAKLTKRMRVIREKVDATKQYDINEAIALLKELATAKFNESVDVAVNLGIDARKSDQNVRGATVLPHGTGRSVRVAVFTQGPNAEAAKAAGAELVGMEDLADQIKKGEMNFDVVIASPDAMRVVGLLGQVLGPRGLMPNPKVGTVTPNVAEAVKNAKAGQVRYRNDKNGIIHTTIGKVDFDADKLKENLEALLVALKKAKPSQAKGVYIKKVSISTTMGAGVAVDQAGLSASAN.

This sequence belongs to the universal ribosomal protein uL1 family. Part of the 50S ribosomal subunit.

In terms of biological role, binds directly to 23S rRNA. The L1 stalk is quite mobile in the ribosome, and is involved in E site tRNA release. Its function is as follows. Protein L1 is also a translational repressor protein, it controls the translation of the L11 operon by binding to its mRNA. The polypeptide is Large ribosomal subunit protein uL1 (Salmonella gallinarum (strain 287/91 / NCTC 13346)).